Consider the following 261-residue polypeptide: Type III pantothenate kinase (261 aa).

6–13 (DAGNTNVV) is a binding site for ATP. A substrate-binding site is contributed by 108 to 111 (GADR). Asp110 acts as the Proton acceptor in catalysis. Asp130 contacts K(+). An ATP-binding site is contributed by Thr133. Thr185 contacts substrate.

This sequence belongs to the type III pantothenate kinase family. In terms of assembly, homodimer. Requires NH4(+) as cofactor. The cofactor is K(+).

The protein resides in the cytoplasm. The catalysed reaction is (R)-pantothenate + ATP = (R)-4'-phosphopantothenate + ADP + H(+). Its pathway is cofactor biosynthesis; coenzyme A biosynthesis; CoA from (R)-pantothenate: step 1/5. Its function is as follows. Catalyzes the phosphorylation of pantothenate (Pan), the first step in CoA biosynthesis. This is Type III pantothenate kinase from Rhodospirillum centenum (strain ATCC 51521 / SW).